Here is a 361-residue protein sequence, read N- to C-terminus: Phospho-N-acetylmuramoyl-pentapeptide-transferase (361 aa).

A run of 10 helical transmembrane segments spans residues 28–48 (LAAL…IRSL), 73–93 (TMGG…WADL), 97–117 (YIWV…VDDY), 134–154 (FFWQ…TADL), 168–188 (VAIP…IVGT), 200–220 (GLAI…AYVA), 237–257 (AGEL…FLWF), 264–284 (VFMG…ITVI), 289–309 (IVLV…MIQV), and 338–358 (QVVV…LSTL).

This sequence belongs to the glycosyltransferase 4 family. MraY subfamily. Mg(2+) serves as cofactor.

It localises to the cell inner membrane. It catalyses the reaction UDP-N-acetyl-alpha-D-muramoyl-L-alanyl-gamma-D-glutamyl-meso-2,6-diaminopimeloyl-D-alanyl-D-alanine + di-trans,octa-cis-undecaprenyl phosphate = di-trans,octa-cis-undecaprenyl diphospho-N-acetyl-alpha-D-muramoyl-L-alanyl-D-glutamyl-meso-2,6-diaminopimeloyl-D-alanyl-D-alanine + UMP. Its pathway is cell wall biogenesis; peptidoglycan biosynthesis. Functionally, catalyzes the initial step of the lipid cycle reactions in the biosynthesis of the cell wall peptidoglycan: transfers peptidoglycan precursor phospho-MurNAc-pentapeptide from UDP-MurNAc-pentapeptide onto the lipid carrier undecaprenyl phosphate, yielding undecaprenyl-pyrophosphoryl-MurNAc-pentapeptide, known as lipid I. This Nitrosomonas europaea (strain ATCC 19718 / CIP 103999 / KCTC 2705 / NBRC 14298) protein is Phospho-N-acetylmuramoyl-pentapeptide-transferase.